We begin with the raw amino-acid sequence, 460 residues long: Ankyrin repeat and MYND domain-containing protein 2 (460 aa).

ANK repeat units follow at residues 45–74 (HGMT…DVNC), 79–108 (HGYT…ETDV), and 159–188 (KLAG…NPLL). Cys-320, Cys-323, Cys-332, Cys-335, Cys-341, Cys-345, His-353, and Cys-357 together coordinate Zn(2+). The segment at 320–357 (CTTCGEKGADKRCSVCKVVMYCDQNCQKTHWFTHKKVC) adopts an MYND-type zinc-finger fold. 2 stretches are compositionally biased toward basic and acidic residues: residues 371–387 (AAKE…KDEA) and 425–436 (ELTKEPEARAPR). The disordered stretch occupies residues 371–460 (AAKEKRRQEK…ALQKIQDSEE (90 aa)).

The protein resides in the cell projection. It is found in the cilium. Functionally, may be involved in the trafficking of signaling proteins to the cilia. This is Ankyrin repeat and MYND domain-containing protein 2 (ANKMY2) from Gallus gallus (Chicken).